Here is a 136-residue protein sequence, read N- to C-terminus: Early E3 15.3 kDa protein (136 aa).

It belongs to the adenoviridae E3_15 family.

Its function is as follows. Protects virus-infected cells from TNF-induced cytolysis. The polypeptide is Early E3 15.3 kDa protein (Human adenovirus B serotype 3 (HAdV-3)).